We begin with the raw amino-acid sequence, 50 residues long: Photosystem II reaction center protein K (50 aa).

The propeptide occupies 1–13; sequence MLNLNFTNITVMG. Residues 25 to 45 form a helical membrane-spanning segment; it reads IVDILPIIPILFFLLAFVWQA.

It belongs to the PsbK family. As to quaternary structure, PSII is composed of 1 copy each of membrane proteins PsbA, PsbB, PsbC, PsbD, PsbE, PsbF, PsbH, PsbI, PsbJ, PsbK, PsbL, PsbM, PsbT, PsbY, PsbZ, Psb30/Ycf12, at least 3 peripheral proteins of the oxygen-evolving complex and a large number of cofactors. It forms dimeric complexes.

The protein resides in the plastid. It localises to the chloroplast thylakoid membrane. Its function is as follows. One of the components of the core complex of photosystem II (PSII). PSII is a light-driven water:plastoquinone oxidoreductase that uses light energy to abstract electrons from H(2)O, generating O(2) and a proton gradient subsequently used for ATP formation. It consists of a core antenna complex that captures photons, and an electron transfer chain that converts photonic excitation into a charge separation. The chain is Photosystem II reaction center protein K from Euglena myxocylindracea.